A 298-amino-acid chain; its full sequence is Mimecan (298 aa).

The N-terminal stretch at 1 to 20 (MKTLQSTLLLLLLVPLIKPA) is a signal peptide. Threonine 80 carries O-linked (GalNAc...) threonine glycosylation. Asparagine 88 carries an N-linked (GlcNAc...) (keratan sulfate) asparagine glycan. 7 LRR repeats span residues 112-131 (DAVP…FNKI), 132-155 (KKLT…GNLI), 156-179 (EDIE…ENQL), 180-199 (LKLP…YNKI), 200-225 (KSRG…HNAL), 226-246 (ESVP…FNNI), and 247-277 (ASIT…GNPI). An N-linked (GlcNAc...) (keratan sulfate) asparagine glycan is attached at asparagine 214. A disulfide bridge connects residues cysteine 255 and cysteine 288. Residue asparagine 258 is glycosylated (N-linked (GlcNAc...) (keratan sulfate) asparagine).

The protein belongs to the small leucine-rich proteoglycan (SLRP) family. SLRP class III subfamily. Post-translationally, O-glycosylated with a core 1 or possibly core 8 glycan. In terms of processing, contains keratan sulfate. As to expression, bone.

It is found in the secreted. The protein localises to the extracellular space. It localises to the extracellular matrix. Functionally, induces bone formation in conjunction with TGF-beta-1 or TGF-beta-2. The polypeptide is Mimecan (OGN) (Homo sapiens (Human)).